Here is a 176-residue protein sequence, read N- to C-terminus: Crossover junction endodeoxyribonuclease RuvC (176 aa).

Residues D7, E67, and D139 contribute to the active site. The Mg(2+) site is built by D7, E67, and D139.

This sequence belongs to the RuvC family. In terms of assembly, homodimer which binds Holliday junction (HJ) DNA. The HJ becomes 2-fold symmetrical on binding to RuvC with unstacked arms; it has a different conformation from HJ DNA in complex with RuvA. In the full resolvosome a probable DNA-RuvA(4)-RuvB(12)-RuvC(2) complex forms which resolves the HJ. Mg(2+) is required as a cofactor.

The protein resides in the cytoplasm. The enzyme catalyses Endonucleolytic cleavage at a junction such as a reciprocal single-stranded crossover between two homologous DNA duplexes (Holliday junction).. The RuvA-RuvB-RuvC complex processes Holliday junction (HJ) DNA during genetic recombination and DNA repair. Endonuclease that resolves HJ intermediates. Cleaves cruciform DNA by making single-stranded nicks across the HJ at symmetrical positions within the homologous arms, yielding a 5'-phosphate and a 3'-hydroxyl group; requires a central core of homology in the junction. The consensus cleavage sequence is 5'-(A/T)TT(C/G)-3'. Cleavage occurs on the 3'-side of the TT dinucleotide at the point of strand exchange. HJ branch migration catalyzed by RuvA-RuvB allows RuvC to scan DNA until it finds its consensus sequence, where it cleaves and resolves the cruciform DNA. The chain is Crossover junction endodeoxyribonuclease RuvC from Pelobacter propionicus (strain DSM 2379 / NBRC 103807 / OttBd1).